We begin with the raw amino-acid sequence, 240 residues long: Pyridoxine 5'-phosphate synthase (240 aa).

A 3-amino-2-oxopropyl phosphate-binding site is contributed by Asn7. A 1-deoxy-D-xylulose 5-phosphate-binding site is contributed by 9–10 (DH). Arg18 provides a ligand contact to 3-amino-2-oxopropyl phosphate. The active-site Proton acceptor is the His43. Positions 45 and 50 each coordinate 1-deoxy-D-xylulose 5-phosphate. The active-site Proton acceptor is the Glu70. Thr100 contacts 1-deoxy-D-xylulose 5-phosphate. Residue His191 is the Proton donor of the active site. 3-amino-2-oxopropyl phosphate is bound by residues Gly192 and 213-214 (GH).

Belongs to the PNP synthase family. In terms of assembly, homooctamer; tetramer of dimers.

It localises to the cytoplasm. It catalyses the reaction 3-amino-2-oxopropyl phosphate + 1-deoxy-D-xylulose 5-phosphate = pyridoxine 5'-phosphate + phosphate + 2 H2O + H(+). Its pathway is cofactor biosynthesis; pyridoxine 5'-phosphate biosynthesis; pyridoxine 5'-phosphate from D-erythrose 4-phosphate: step 5/5. In terms of biological role, catalyzes the complicated ring closure reaction between the two acyclic compounds 1-deoxy-D-xylulose-5-phosphate (DXP) and 3-amino-2-oxopropyl phosphate (1-amino-acetone-3-phosphate or AAP) to form pyridoxine 5'-phosphate (PNP) and inorganic phosphate. In Microcystis aeruginosa (strain NIES-843 / IAM M-2473), this protein is Pyridoxine 5'-phosphate synthase.